The following is a 124-amino-acid chain: Small ribosomal subunit protein bS6 (124 aa).

The tract at residues 99 to 124 is disordered; the sequence is PLPAPRVMPGSEAAQQQQAEAAASAD. Residues 109–124 show a composition bias toward low complexity; that stretch reads SEAAQQQQAEAAASAD.

The protein belongs to the bacterial ribosomal protein bS6 family.

Its function is as follows. Binds together with bS18 to 16S ribosomal RNA. This Synechococcus sp. (strain CC9605) protein is Small ribosomal subunit protein bS6.